A 243-amino-acid chain; its full sequence is Glucosamine-6-phosphate deaminase (243 aa).

The active-site Proton acceptor; for enolization step is the D67. The For ring-opening step role is filled by N137. The active-site Proton acceptor; for ring-opening step is H139. E144 (for ring-opening step) is an active-site residue.

This sequence belongs to the glucosamine/galactosamine-6-phosphate isomerase family. NagB subfamily.

The enzyme catalyses alpha-D-glucosamine 6-phosphate + H2O = beta-D-fructose 6-phosphate + NH4(+). It participates in amino-sugar metabolism; N-acetylneuraminate degradation; D-fructose 6-phosphate from N-acetylneuraminate: step 5/5. Functionally, catalyzes the reversible isomerization-deamination of glucosamine 6-phosphate (GlcN6P) to form fructose 6-phosphate (Fru6P) and ammonium ion. This Staphylococcus epidermidis (strain ATCC 12228 / FDA PCI 1200) protein is Glucosamine-6-phosphate deaminase.